A 31-amino-acid polypeptide reads, in one-letter code: Potassium channel toxin alpha-KTx 5.4 (31 aa).

Disulfide bonds link Cys-3/Cys-21, Cys-8/Cys-26, and Cys-12/Cys-28. Residues 6–9 (RRCE) form a [R/K]XCQ motif region. Tyr-31 carries the post-translational modification Tyrosine amide.

Belongs to the short scorpion toxin superfamily. Potassium channel inhibitor family. Alpha-KTx 05 subfamily. As to expression, expressed by the venom gland.

It localises to the secreted. Its function is as follows. Blocks small conductance calcium-activated potassium channels. Shows activity on KCa2.2/KCNN2 (IC(50)=0.0243 nM), KCa2.3/KCNN3 (IC(50)=1.7 nM), and KCa2.1/KCNN1 (IC(50)=42 nM). Induces cell death when tested on human T lymphoblastic leukemia Jurkat E6.1 and human breast cancer MDA-MB-231 cell lines which constituvely express KCa2.2/KCNN2, but not on human peripheral blood lymphocytes (which do not express KCa2.2/KCNN2). The protein is Potassium channel toxin alpha-KTx 5.4 of Hottentotta tamulus (Eastern Indian scorpion).